The sequence spans 229 residues: UPF0758 protein CLL_A0562 (229 aa).

The region spanning 107 to 229 (KIMSPNDLAM…FISLKEKGFI (123 aa)) is the MPN domain. Zn(2+) is bound by residues histidine 178, histidine 180, and aspartate 191. Residues 178–191 (HNHPSGDPTPSKED) carry the JAMM motif motif.

It belongs to the UPF0758 family.

In Clostridium botulinum (strain Eklund 17B / Type B), this protein is UPF0758 protein CLL_A0562.